The sequence spans 712 residues: Serrate RNA effector molecule homolog (712 aa).

Disordered regions lie at residues 1–80, 214–256, and 620–712; these read MVDS…DSIY, ADIK…TEKS, and QRPV…DDIP. Composition is skewed to basic and acidic residues over residues 8–26 and 34–54; these read GDRRRDKFARERRDEDYRR and YDNKRPGGRRDDYQVKRSRGD. Residues 65-79 are compositionally biased toward polar residues; sequence RSGNGSDLPTESDSI. Residues 214–236 show a composition bias toward basic and acidic residues; it reads ADIKKDENGNGTEQPKEEPEVKQ. The segment covering 240-251 has biased composition (acidic residues); sequence ATEELEEGAIED. Basic and acidic residues-rich tracts occupy residues 621 to 637 and 645 to 655; these read RPVDCEPKQAPRDDHRG and GYGRERDDDRG. A compositionally biased stretch (gly residues) spans 656–668; that stretch reads PGGGGRNSFGGGG.

Belongs to the ARS2 family.

The protein localises to the nucleus. Acts as a mediator between the cap-binding complex (CBC) and the primary microRNAs (miRNAs) processing machinery. Contributes to the stability and delivery of capped primary miRNA transcripts to the primary miRNA processing complex, thereby playing a role in RNA-mediated gene silencing (RNAi) by miRNAs. The sequence is that of Serrate RNA effector molecule homolog from Caenorhabditis elegans.